Consider the following 78-residue polypeptide: Large ribosomal subunit protein bL28 (78 aa).

The interval 1-29 is disordered; the sequence is MSAHCQVTGRKPSFGKSVSHSHRRTSRRW.

This sequence belongs to the bacterial ribosomal protein bL28 family.

The sequence is that of Large ribosomal subunit protein bL28 from Corynebacterium glutamicum (strain ATCC 13032 / DSM 20300 / JCM 1318 / BCRC 11384 / CCUG 27702 / LMG 3730 / NBRC 12168 / NCIMB 10025 / NRRL B-2784 / 534).